Here is a 263-residue protein sequence, read N- to C-terminus: 4-hydroxy-2-oxo-heptane-1,7-dioate aldolase (263 aa).

His-45 functions as the Proton acceptor in the catalytic mechanism. Position 147 (Gln-147) interacts with substrate. A divalent metal cation is bound at residue Glu-149. Substrate contacts are provided by Ala-174 and Asp-175. A divalent metal cation is bound at residue Asp-175.

This sequence belongs to the HpcH/HpaI aldolase family. As to quaternary structure, homohexamer; trimer of dimers. A divalent metal cation serves as cofactor.

It carries out the reaction 4-hydroxy-2-oxoheptanedioate = succinate semialdehyde + pyruvate. It participates in aromatic compound metabolism; 4-hydroxyphenylacetate degradation; pyruvate and succinate semialdehyde from 4-hydroxyphenylacetate: step 7/7. Its function is as follows. Catalyzes the reversible retro-aldol cleavage of 4-hydroxy-2-ketoheptane-1,7-dioate (HKHD) to pyruvate and succinic semialdehyde. This chain is 4-hydroxy-2-oxo-heptane-1,7-dioate aldolase, found in Salmonella arizonae (strain ATCC BAA-731 / CDC346-86 / RSK2980).